A 270-amino-acid chain; its full sequence is Glutamate racemase (270 aa).

Residues 7-8 and 39-40 contribute to the substrate site; these read DS and YG. Catalysis depends on cysteine 70, which acts as the Proton donor/acceptor. 71–72 is a substrate binding site; it reads NT. Catalysis depends on cysteine 194, which acts as the Proton donor/acceptor. 195–196 is a substrate binding site; it reads TH.

This sequence belongs to the aspartate/glutamate racemases family.

It catalyses the reaction L-glutamate = D-glutamate. Its pathway is cell wall biogenesis; peptidoglycan biosynthesis. Provides the (R)-glutamate required for cell wall biosynthesis. This is Glutamate racemase from Cereibacter sphaeroides (strain ATCC 17023 / DSM 158 / JCM 6121 / CCUG 31486 / LMG 2827 / NBRC 12203 / NCIMB 8253 / ATH 2.4.1.) (Rhodobacter sphaeroides).